Consider the following 95-residue polypeptide: Opiscorpine-2 (95 aa).

The first 19 residues, 1-19 (MNNKLTALIFHGLLAIASC), serve as a signal peptide directing secretion. The BetaSPN-type CS-alpha/beta domain occupies 55–95 (EFMCMANMDPTGSCETHCQKASGEKGYCHGTKCKCGVPLSY). Disulfide bonds link C58–C82, C68–C87, and C72–C89.

The protein belongs to the long chain scorpion toxin family. Class 3 subfamily. Expressed by the venom gland.

The protein localises to the secreted. In terms of biological role, has antimicrobial activity against yeasts and bacteria. The sequence is that of Opiscorpine-2 from Opistophthalmus carinatus (African yellow leg scorpion).